The chain runs to 490 residues: WD repeat-containing protein JIP5 (490 aa).

WD repeat units follow at residues K23–Q64, Q70–R112, P118–D155, S157–K196, D242–Q284, S286–N327, and G340–E377. The segment at S368–L490 is disordered. 2 stretches are compositionally biased toward acidic residues: residues E370–D406 and E413–T437. The segment covering E438–S448 has biased composition (basic and acidic residues). Positions K450–K461 are enriched in polar residues. Residues K469 to I484 show a composition bias toward basic residues.

It belongs to the WD repeat WDR55 family.

The protein localises to the nucleus. The protein resides in the nucleolus. The protein is WD repeat-containing protein JIP5 (JIP5) of Meyerozyma guilliermondii (strain ATCC 6260 / CBS 566 / DSM 6381 / JCM 1539 / NBRC 10279 / NRRL Y-324) (Yeast).